The following is a 364-amino-acid chain: tRNA/tmRNA (uracil-C(5))-methyltransferase (364 aa).

S-adenosyl-L-methionine is bound by residues glutamine 188, tyrosine 216, asparagine 221, glutamate 237, and aspartate 297. Residue cysteine 322 is the Nucleophile of the active site. Glutamate 356 (proton acceptor) is an active-site residue.

The protein belongs to the class I-like SAM-binding methyltransferase superfamily. RNA M5U methyltransferase family. TrmA subfamily.

It carries out the reaction uridine(54) in tRNA + S-adenosyl-L-methionine = 5-methyluridine(54) in tRNA + S-adenosyl-L-homocysteine + H(+). The catalysed reaction is uridine(341) in tmRNA + S-adenosyl-L-methionine = 5-methyluridine(341) in tmRNA + S-adenosyl-L-homocysteine + H(+). Functionally, dual-specificity methyltransferase that catalyzes the formation of 5-methyluridine at position 54 (m5U54) in all tRNAs, and that of position 341 (m5U341) in tmRNA (transfer-mRNA). The polypeptide is tRNA/tmRNA (uracil-C(5))-methyltransferase (Teredinibacter turnerae (strain ATCC 39867 / T7901)).